A 600-amino-acid chain; its full sequence is NADH-quinone oxidoreductase subunit C/D (600 aa).

An NADH dehydrogenase I subunit C region spans residues 1–190; sequence MIDLMPKKNT…EPFFLNEQKE (190 aa). Residues 214–600 are NADH dehydrogenase I subunit D; the sequence is EFMFLNLGPN…IDFVMSDVDR (387 aa).

This sequence in the N-terminal section; belongs to the complex I 30 kDa subunit family. In the C-terminal section; belongs to the complex I 49 kDa subunit family. As to quaternary structure, NDH-1 is composed of 13 different subunits. Subunits NuoB, CD, E, F, and G constitute the peripheral sector of the complex.

The protein resides in the cell inner membrane. The catalysed reaction is a quinone + NADH + 5 H(+)(in) = a quinol + NAD(+) + 4 H(+)(out). NDH-1 shuttles electrons from NADH, via FMN and iron-sulfur (Fe-S) centers, to quinones in the respiratory chain. The immediate electron acceptor for the enzyme in this species is believed to be ubiquinone. Couples the redox reaction to proton translocation (for every two electrons transferred, four hydrogen ions are translocated across the cytoplasmic membrane), and thus conserves the redox energy in a proton gradient. In Buchnera aphidicola subsp. Acyrthosiphon pisum (strain APS) (Acyrthosiphon pisum symbiotic bacterium), this protein is NADH-quinone oxidoreductase subunit C/D.